Consider the following 217-residue polypeptide: Ras-related protein Rab-39A (217 aa).

Residues Ser17, Gly20, Lys21, Ser22, Cys23, and Thr44 each contribute to the GTP site. Residue Ser22 participates in Mg(2+) binding. Positions 39 to 47 are switch-I; sequence PACDPTVGV. Mg(2+) contacts are provided by Thr44 and Asp68. The GTP site is built by Gly71, His127, Lys128, Asp130, Ala158, and Lys159. Residues 71-87 are switch-II; that stretch reads GQERFRSITRSYYRNSV. 2 S-geranylgeranyl cysteine lipidation sites follow: Cys215 and Cys217. Cys217 bears the Cysteine methyl ester mark.

The protein belongs to the small GTPase superfamily. Rab family. Interacts (GDP-bound) with C9orf72; C9orf72 acts as a GEF for RAB39A. Interacts (GTP-bound) with HOPS complex components VPS39 and VPS41, and STX17; interaction between HOPS components and RAB39A contributes to obtaining a functional HOPS complex that promotes membrane fusion driven by STX17-SNAP29-VAMP8. Interacts with BECN1. Probably associates with the PI3K (PI3KC3/PI3K-III/class III phosphatidylinositol 3-kinase) complex. Interacts with UACA. Interacts with isoform a of RASSF1. Does not interact with isoform c of RASSF1. Requires Mg(2+) as cofactor. Post-translationally, prenylated. Prenylation is required for association with cellular membranes.

The protein localises to the cell membrane. It localises to the cytoplasmic vesicle. The protein resides in the phagosome membrane. It is found in the lysosome membrane. Its subcellular location is the autolysosome membrane. The enzyme catalyses GTP + H2O = GDP + phosphate + H(+). Regulated by guanine nucleotide exchange factors (GEFs) including c9Orf72, which promote the exchange of bound GDP for free GTP. Regulated by GTPase activating proteins (GAPs) which increase the GTP hydrolysis activity. Inhibited by GDP dissociation inhibitors (GDIs). Functionally, the small GTPases Rab are key regulators of intracellular membrane trafficking, from the formation of transport vesicles to their fusion with membranes. Rabs cycle between an inactive GDP-bound form and an active GTP-bound form that is able to recruit to membranes different sets of downstream effectors directly responsible for vesicle formation, movement, tethering and fusion. RAB39A regulates autophagosome-lysosome fusion via recruitment of the HOPS endosomal tethering complex onto lysosomes; this process involves lysosomal RAB39A and autophagosomal RAB2A recruitment of HOPS subcomplexes VPS41-VPS16-VPS18-VPS33A and VPS39-VPS11, respectively, which assemble into a functional complex to mediate membrane tethering and SNAREs-driven membrane fusion. Also negatively regulates lipopolysaccharide (LPS)-induced autophagosome formation in macrophages, possibly by implicating PI3K. Promotes the delivery of MHC-I molecules from the ER to phagosomes and the generation of peptide-loaded MHC-I complexes in phagosomes, thus enhancing antigen cross-presentation by dendritic cells. Plays a role in the maturation and acidification of phagosomes that engulf pathogens, such as S.aureus and M.tuberculosis. Plays a role in the fusion of phagosomes with lysosomes. May be involved in multiple neurite formation. The chain is Ras-related protein Rab-39A from Homo sapiens (Human).